The chain runs to 463 residues: DDB1- and CUL4-associated factor 12-like protein 1 (463 aa).

A disordered region spans residues 1-35 (MAQQQTGSRKRKAPAVEADAESSPSQGLAAADGEG). WD repeat units lie at residues 87 to 137 (LTER…PLLR), 138 to 184 (DSEA…SLDP), 185 to 252 (LCLG…DVEA), 253 to 297 (IPRA…ALSR), 298 to 341 (LLSI…QQNI), and 342 to 376 (RPLC…LFYD).

The protein belongs to the WD repeat DCAF12 family.

The sequence is that of DDB1- and CUL4-associated factor 12-like protein 1 (DCAF12L1) from Homo sapiens (Human).